Here is a 772-residue protein sequence, read N- to C-terminus: Metal transporter CNNM4 (772 aa).

Topologically, residues 1–175 (MAPGGGGGRR…SLLFMVEEHG (175 aa)) are extracellular. Residue Asn-120 is glycosylated (N-linked (GlcNAc...) asparagine). A helical membrane pass occupies residues 176-196 (RFLPLWLHILLVLVLLVLSGI). The CNNM transmembrane domain maps to 176–356 (RFLPLWLHIL…EPYNDLVKEE (181 aa)). Over 197-237 (FSGLNLGLMALDPMELRIVQNCGTEKERRYARKIEPIRRKG) the chain is Cytoplasmic. An intramembrane region (helical) is located at residues 238–258 (NYLLCSLLLGNVLVNTSLTIL). Over 259–261 (LDN) the chain is Cytoplasmic. Residues 262 to 282 (LIGSGIMAVASSTIGIVIFGE) traverse the membrane as a helical segment. Residues 283–290 (ILPQALCS) are Extracellular-facing. Residues 291-313 (RHGLAVGANTIVLTKIFMLLTFP) traverse the membrane as a helical segment. At 314-772 (LSFPISKLLD…LHRASQEGTI (459 aa)) the chain is on the cytoplasmic side. 2 CBS domains span residues 375 to 436 (MTQL…CTPL) and 443 to 509 (YNHP…ILDE). A disordered region spans residues 647-676 (PDRSPAHPTPLSRSASLSYPDRNTDMTPSS). Phosphoserine occurs at positions 658, 662, and 767.

It belongs to the ACDP family. As to quaternary structure, interacts with COX11. As to expression, present in spinal cord dorsal horn neurons and in developing teeth (at protein level). In the tooth, higher expression is found in the ameloblasts during the transition and maturation phases of amelogenesis; reduced expression in the odontoblasts.

It is found in the cell membrane. Its function is as follows. Probable metal transporter. The interaction with the metal ion chaperone COX11 suggests that it may play a role in sensory neuron functions. May play a role in biomineralization and retinal function. In Rattus norvegicus (Rat), this protein is Metal transporter CNNM4 (Cnnm4).